We begin with the raw amino-acid sequence, 397 residues long: Probable peptidoglycan glycosyltransferase FtsW (397 aa).

Residues 1–26 lie on the Cytoplasmic side of the membrane; sequence MSPRNSALERFRQHQKIPEKRWQRLA. The helical transmembrane segment at 27-47 threads the bilayer; sequence FPDVGLLLCWLALIVIGMVMV. At 48–69 the chain is on the periplasmic side; that stretch reads TSSSLSEAHVERLSTHHFAIRQ. A helical transmembrane segment spans residues 70–90; the sequence is GIFYVGSSIFAYIAFMLGTNF. Topologically, residues 91-96 are cytoplasmic; the sequence is YREKAK. A helical transmembrane segment spans residues 97–117; sequence FILGLAFLGLLLVYAPGIGVV. At 118–126 the chain is on the periplasmic side; that stretch reads VNGSRRWLN. Residues 127–147 traverse the membrane as a helical segment; the sequence is LGVINLQVGEFAKLAVFIFTA. The Cytoplasmic portion of the chain corresponds to 148–159; that stretch reads AYLQHHTQRLDH. Residues 160–180 traverse the membrane as a helical segment; the sequence is SWQPIIGLLAVTACFALMFYL. At 181 to 185 the chain is on the periplasmic side; it reads QPDFG. A helical membrane pass occupies residues 186–206; the sequence is TMVVIVATVLGMLFLSGVSIW. Arg207 is a topological domain (cytoplasmic). Residues 208-228 form a helical membrane-spanning segment; sequence LLLLGVLIAPAMVWVLISESY. The Periplasmic portion of the chain corresponds to 229–294; sequence RLRRLTTFIN…IFSIIAEETG (66 aa). Residues 295-315 traverse the membrane as a helical segment; sequence LVGALIVMAILMILVWRAFAI. The Cytoplasmic segment spans residues 316 to 328; sequence GYLADRMRKRFSS. The chain crosses the membrane as a helical span at residues 329-349; sequence LLAYGIGLWLGLQSLINIGVT. Topologically, residues 350-359 are periplasmic; the sequence is TGALPTKGLT. A helical transmembrane segment spans residues 360 to 380; sequence LPLISYGGSSILMTSIALAIL. The Cytoplasmic segment spans residues 381-397; sequence ARIDAESRFIARLEGKI.

Belongs to the SEDS family. FtsW subfamily.

It localises to the cell inner membrane. The catalysed reaction is [GlcNAc-(1-&gt;4)-Mur2Ac(oyl-L-Ala-gamma-D-Glu-L-Lys-D-Ala-D-Ala)](n)-di-trans,octa-cis-undecaprenyl diphosphate + beta-D-GlcNAc-(1-&gt;4)-Mur2Ac(oyl-L-Ala-gamma-D-Glu-L-Lys-D-Ala-D-Ala)-di-trans,octa-cis-undecaprenyl diphosphate = [GlcNAc-(1-&gt;4)-Mur2Ac(oyl-L-Ala-gamma-D-Glu-L-Lys-D-Ala-D-Ala)](n+1)-di-trans,octa-cis-undecaprenyl diphosphate + di-trans,octa-cis-undecaprenyl diphosphate + H(+). It functions in the pathway cell wall biogenesis; peptidoglycan biosynthesis. Peptidoglycan polymerase that is essential for cell division. The protein is Probable peptidoglycan glycosyltransferase FtsW of Dichelobacter nodosus (strain VCS1703A).